A 505-amino-acid chain; its full sequence is AMP phosphorylase (505 aa).

AMP-binding positions include Gly-170, 196–201 (SRAITS), and Thr-205. The Proton donor role is filled by Asp-258. The AMP site is built by Ser-266 and Lys-290.

Belongs to the thymidine/pyrimidine-nucleoside phosphorylase family. Type 2 subfamily.

The catalysed reaction is AMP + phosphate = alpha-D-ribose 1,5-bisphosphate + adenine. The enzyme catalyses CMP + phosphate = cytosine + alpha-D-ribose 1,5-bisphosphate. It catalyses the reaction UMP + phosphate = alpha-D-ribose 1,5-bisphosphate + uracil. Its function is as follows. Catalyzes the conversion of AMP and phosphate to adenine and ribose 1,5-bisphosphate (R15P). Exhibits phosphorylase activity toward CMP and UMP in addition to AMP. Functions in an archaeal AMP degradation pathway, together with R15P isomerase and RubisCO. This is AMP phosphorylase from Methanococcus maripaludis (strain DSM 14266 / JCM 13030 / NBRC 101832 / S2 / LL).